A 303-amino-acid chain; its full sequence is MKWIHVNARFEADDMALAEELVAQIFFDLDLKGVVCEVPLPEPDEGFGSNALAQPDTHSISGYLPDLSTSDLLFADIKKKADALKGINVTLSTRIVDDQDWAESWKDFFFVTRITDTLVIRPSWREFEPKPGDVVIDLDPGMAFGTGTHETTAMCLALVQEQITPGASFLDVGTGSGILMIAAAKLGAGTLKGLDNDEAAVQIAGKNLEHNRISPQSFEIRCTTLDRYPHEKFDLVVANILAEVIISILPEIHSRLAPGGRAILSGIIIAWEERVKTALEDNGFTLVKTTTQGEWVALVAELV.

The S-adenosyl-L-methionine site is built by threonine 152, glycine 173, aspartate 195, and asparagine 239.

This sequence belongs to the methyltransferase superfamily. PrmA family.

Its subcellular location is the cytoplasm. The enzyme catalyses L-lysyl-[protein] + 3 S-adenosyl-L-methionine = N(6),N(6),N(6)-trimethyl-L-lysyl-[protein] + 3 S-adenosyl-L-homocysteine + 3 H(+). Functionally, methylates ribosomal protein L11. The sequence is that of Ribosomal protein L11 methyltransferase from Desulforapulum autotrophicum (strain ATCC 43914 / DSM 3382 / VKM B-1955 / HRM2) (Desulfobacterium autotrophicum).